A 277-amino-acid polypeptide reads, in one-letter code: Ubiquinone biosynthesis protein COQ4, mitochondrial (277 aa).

The N-terminal 14 residues, 1–14, are a transit peptide targeting the mitochondrion; that stretch reads MLTKRALRTTDPYR. Residues H157, D158, H161, and E173 each coordinate Zn(2+).

The protein belongs to the COQ4 family. Component of a multi-subunit COQ enzyme complex, composed of at least COQ3, COQ4, COQ5, COQ6, COQ7 and COQ9. Requires Zn(2+) as cofactor.

Its subcellular location is the mitochondrion inner membrane. The enzyme catalyses a 4-hydroxy-3-methoxy-5-(all-trans-polyprenyl)benzoate + H(+) = a 2-methoxy-6-(all-trans-polyprenyl)phenol + CO2. The protein operates within cofactor biosynthesis; ubiquinone biosynthesis. Functionally, lyase that catalyzes the C1-decarboxylation of 4-hydroxy-3-methoxy-5-(all-trans-polyprenyl)benzoic acid into 2-methoxy-6-(all-trans-polyprenyl)phenol during ubiquinone biosynthesis. This chain is Ubiquinone biosynthesis protein COQ4, mitochondrial, found in Ajellomyces capsulatus (strain G186AR / H82 / ATCC MYA-2454 / RMSCC 2432) (Darling's disease fungus).